The sequence spans 59 residues: Large ribosomal subunit protein bL32 (59 aa).

Residues 1 to 59 are disordered; the sequence is MAVQQNKKSPSKRGMHRSHDFLTNPPLAVEPTSGEIHLRHHVSPNGYYRGRKVLPAKGE. Positions 49–59 are enriched in basic residues; the sequence is RGRKVLPAKGE.

The protein belongs to the bacterial ribosomal protein bL32 family.

This Methylobacillus flagellatus (strain ATCC 51484 / DSM 6875 / VKM B-1610 / KT) protein is Large ribosomal subunit protein bL32.